A 309-amino-acid chain; its full sequence is Aspartate carbamoyltransferase catalytic subunit (309 aa).

2 residues coordinate carbamoyl phosphate: R48 and T49. K76 contacts L-aspartate. Carbamoyl phosphate contacts are provided by R98, H128, and Q131. L-aspartate-binding residues include R161 and R211. Positions 250 and 251 each coordinate carbamoyl phosphate.

Belongs to the aspartate/ornithine carbamoyltransferase superfamily. ATCase family. As to quaternary structure, heterododecamer (2C3:3R2) of six catalytic PyrB chains organized as two trimers (C3), and six regulatory PyrI chains organized as three dimers (R2).

It carries out the reaction carbamoyl phosphate + L-aspartate = N-carbamoyl-L-aspartate + phosphate + H(+). It functions in the pathway pyrimidine metabolism; UMP biosynthesis via de novo pathway; (S)-dihydroorotate from bicarbonate: step 2/3. Catalyzes the condensation of carbamoyl phosphate and aspartate to form carbamoyl aspartate and inorganic phosphate, the committed step in the de novo pyrimidine nucleotide biosynthesis pathway. The polypeptide is Aspartate carbamoyltransferase catalytic subunit (Oceanobacillus iheyensis (strain DSM 14371 / CIP 107618 / JCM 11309 / KCTC 3954 / HTE831)).